A 185-amino-acid polypeptide reads, in one-letter code: Ribosome-recycling factor (185 aa).

The protein belongs to the RRF family.

The protein localises to the cytoplasm. In terms of biological role, responsible for the release of ribosomes from messenger RNA at the termination of protein biosynthesis. May increase the efficiency of translation by recycling ribosomes from one round of translation to another. The sequence is that of Ribosome-recycling factor from Aeromonas salmonicida (strain A449).